Consider the following 477-residue polypeptide: Aspartyl/glutamyl-tRNA(Asn/Gln) amidotransferase subunit B (477 aa).

The protein belongs to the GatB/GatE family. GatB subfamily. Heterotrimer of A, B and C subunits.

The enzyme catalyses L-glutamyl-tRNA(Gln) + L-glutamine + ATP + H2O = L-glutaminyl-tRNA(Gln) + L-glutamate + ADP + phosphate + H(+). The catalysed reaction is L-aspartyl-tRNA(Asn) + L-glutamine + ATP + H2O = L-asparaginyl-tRNA(Asn) + L-glutamate + ADP + phosphate + 2 H(+). In terms of biological role, allows the formation of correctly charged Asn-tRNA(Asn) or Gln-tRNA(Gln) through the transamidation of misacylated Asp-tRNA(Asn) or Glu-tRNA(Gln) in organisms which lack either or both of asparaginyl-tRNA or glutaminyl-tRNA synthetases. The reaction takes place in the presence of glutamine and ATP through an activated phospho-Asp-tRNA(Asn) or phospho-Glu-tRNA(Gln). The sequence is that of Aspartyl/glutamyl-tRNA(Asn/Gln) amidotransferase subunit B from Coxiella burnetii (strain RSA 493 / Nine Mile phase I).